Here is a 282-residue protein sequence, read N- to C-terminus: E3 ubiquitin-protein ligase SIAH1B (282 aa).

Over residues 1–17 (MSRQAATALSTGTSKCP) the composition is skewed to polar residues. A disordered region spans residues 1 to 23 (MSRQAATALSTGTSKCPPSQRVP). Ser-19 is subject to Phosphoserine; by ATM and ATR. An RING-type zinc finger spans residues 41–76 (CPVCFDYVLPPILQCQSGHLVCSNCRPKLTCCPTCR). Residues 90-282 (VANSVLFPCK…LGINVTISMC (193 aa)) form an SBD region. The SIAH-type zinc finger occupies 93–153 (SVLFPCKYSA…VMPHLMHQHK (61 aa)). Cys-98, Cys-105, His-117, Cys-121, Cys-128, Cys-135, His-147, and His-152 together coordinate Zn(2+).

Belongs to the SINA (Seven in absentia) family. Homodimer. In terms of processing, phosphorylated on Ser-19 by ATM and ATR. As to expression, widely expressed at low level in embryos and adults. Due to the high similarity between SIAH1A and SIAH1B, it is difficult to distinguish its own tissue specificity. Overexpressed in endothelial cells of adult lung.

It localises to the cytoplasm. The protein localises to the nucleus. It catalyses the reaction S-ubiquitinyl-[E2 ubiquitin-conjugating enzyme]-L-cysteine + [acceptor protein]-L-lysine = [E2 ubiquitin-conjugating enzyme]-L-cysteine + N(6)-ubiquitinyl-[acceptor protein]-L-lysine.. Its pathway is protein modification; protein ubiquitination. In terms of biological role, E3 ubiquitin-protein ligase that mediates ubiquitination and subsequent proteasomal degradation of target proteins. E3 ubiquitin ligases accept ubiquitin from an E2 ubiquitin-conjugating enzyme in the form of a thioester and then directly transfers the ubiquitin to targeted substrates. Mediates E3 ubiquitin ligase activity either through direct binding to substrates or by functioning as the essential RING domain subunit of larger E3 complexes. The polypeptide is E3 ubiquitin-protein ligase SIAH1B (Siah1b) (Mus musculus (Mouse)).